The following is a 234-amino-acid chain: Probable septum site-determining protein MinC (234 aa).

It belongs to the MinC family. As to quaternary structure, interacts with MinD and FtsZ.

Functionally, cell division inhibitor that blocks the formation of polar Z ring septums. Rapidly oscillates between the poles of the cell to destabilize FtsZ filaments that have formed before they mature into polar Z rings. Prevents FtsZ polymerization. This chain is Probable septum site-determining protein MinC, found in Pseudoalteromonas translucida (strain TAC 125).